The sequence spans 226 residues: Translation initiation factor 6 (226 aa).

Belongs to the eIF-6 family.

In terms of biological role, binds to the 50S ribosomal subunit and prevents its association with the 30S ribosomal subunit to form the 70S initiation complex. This is Translation initiation factor 6 from Haloquadratum walsbyi (strain DSM 16790 / HBSQ001).